Here is a 268-residue protein sequence, read N- to C-terminus: Tryptophan synthase alpha chain (268 aa).

Residues E49 and D60 each act as proton acceptor in the active site.

This sequence belongs to the TrpA family. In terms of assembly, tetramer of two alpha and two beta chains.

The enzyme catalyses (1S,2R)-1-C-(indol-3-yl)glycerol 3-phosphate + L-serine = D-glyceraldehyde 3-phosphate + L-tryptophan + H2O. The protein operates within amino-acid biosynthesis; L-tryptophan biosynthesis; L-tryptophan from chorismate: step 5/5. Functionally, the alpha subunit is responsible for the aldol cleavage of indoleglycerol phosphate to indole and glyceraldehyde 3-phosphate. This Aeromonas hydrophila subsp. hydrophila (strain ATCC 7966 / DSM 30187 / BCRC 13018 / CCUG 14551 / JCM 1027 / KCTC 2358 / NCIMB 9240 / NCTC 8049) protein is Tryptophan synthase alpha chain.